A 417-amino-acid polypeptide reads, in one-letter code: Serine hydroxymethyltransferase (417 aa).

Residues Leu-112 and 116-118 (GHL) each bind (6S)-5,6,7,8-tetrahydrofolate. N6-(pyridoxal phosphate)lysine is present on Lys-221. A (6S)-5,6,7,8-tetrahydrofolate-binding site is contributed by Glu-247.

This sequence belongs to the SHMT family. As to quaternary structure, homodimer. It depends on pyridoxal 5'-phosphate as a cofactor.

It is found in the cytoplasm. It carries out the reaction (6R)-5,10-methylene-5,6,7,8-tetrahydrofolate + glycine + H2O = (6S)-5,6,7,8-tetrahydrofolate + L-serine. The protein operates within one-carbon metabolism; tetrahydrofolate interconversion. It functions in the pathway amino-acid biosynthesis; glycine biosynthesis; glycine from L-serine: step 1/1. In terms of biological role, catalyzes the reversible interconversion of serine and glycine with tetrahydrofolate (THF) serving as the one-carbon carrier. This reaction serves as the major source of one-carbon groups required for the biosynthesis of purines, thymidylate, methionine, and other important biomolecules. Also exhibits THF-independent aldolase activity toward beta-hydroxyamino acids, producing glycine and aldehydes, via a retro-aldol mechanism. The chain is Serine hydroxymethyltransferase from Borrelia duttonii (strain Ly).